Reading from the N-terminus, the 781-residue chain is Ubiquitin carboxyl-terminal hydrolase 14 (781 aa).

Residues Ser-169 to Ile-279 form a UBP-type zinc finger. The Zn(2+) site is built by Cys-171, His-173, Cys-192, Cys-195, Cys-204, Cys-207, Cys-212, His-224, His-228, His-235, Cys-253, and Cys-256. In terms of domain architecture, USP spans Cys-323–Cys-781. The active-site Nucleophile is the Cys-332. UBA domains follow at residues Asp-576 to His-626 and Glu-649 to Asn-689. His-737 (proton acceptor) is an active-site residue.

The protein belongs to the peptidase C19 family.

The protein resides in the cytoplasm. Its subcellular location is the nucleus. The catalysed reaction is Thiol-dependent hydrolysis of ester, thioester, amide, peptide and isopeptide bonds formed by the C-terminal Gly of ubiquitin (a 76-residue protein attached to proteins as an intracellular targeting signal).. Its function is as follows. Required for the adaptation to the presence of glucose in the growth medium; mediates the degradation of enzymes involved in gluconeogenesis when cells are shifted to glucose-containing medium. Required for proteasome-dependent catabolite degradation of fructose-1,6-bisphosphatase (FBP1). Accelerates proteasomal breakdown of ubiquitinated proteins as it disassembles free ubiquitin chains that would compete with ubiquitinated proteins to bind to the proteasome. The chain is Ubiquitin carboxyl-terminal hydrolase 14 (UBP14) from Saccharomyces cerevisiae (strain ATCC 204508 / S288c) (Baker's yeast).